The primary structure comprises 248 residues: tRNA pseudouridine synthase A (248 aa).

Residue aspartate 55 is the Nucleophile of the active site. Residue tyrosine 114 participates in substrate binding.

It belongs to the tRNA pseudouridine synthase TruA family. Homodimer.

It catalyses the reaction uridine(38/39/40) in tRNA = pseudouridine(38/39/40) in tRNA. Formation of pseudouridine at positions 38, 39 and 40 in the anticodon stem and loop of transfer RNAs. This chain is tRNA pseudouridine synthase A, found in Rhodopseudomonas palustris (strain ATCC BAA-98 / CGA009).